A 409-amino-acid polypeptide reads, in one-letter code: Elongation factor Tu, chloroplastic (409 aa).

The region spanning 10–214 is the tr-type G domain; the sequence is KPHVNIGTIG…AVDTYIPTPE (205 aa). Positions 19 to 26 are G1; it reads GHVDHGKT. A GTP-binding site is contributed by 19 to 26; it reads GHVDHGKT. Threonine 26 is a binding site for Mg(2+). Residues 60–64 form a G2 region; sequence GITIN. The G3 stretch occupies residues 81-84; it reads DCPG. Residues 81 to 85 and 136 to 139 contribute to the GTP site; these read DCPGH and NKED. The G4 stretch occupies residues 136-139; it reads NKED. Residues 174-176 form a G5 region; sequence SAL.

This sequence belongs to the TRAFAC class translation factor GTPase superfamily. Classic translation factor GTPase family. EF-Tu/EF-1A subfamily.

It is found in the plastid. The protein localises to the chloroplast. The catalysed reaction is GTP + H2O = GDP + phosphate + H(+). Its function is as follows. GTP hydrolase that promotes the GTP-dependent binding of aminoacyl-tRNA to the A-site of ribosomes during protein biosynthesis. This Pyropia yezoensis (Susabi-nori) protein is Elongation factor Tu, chloroplastic (tufA).